Consider the following 577-residue polypeptide: MHSTEVQAKPLFSWKALGWALLYFWFFSTLLQAIIYISGYSGTNGIRDSLLFSSLWLIPVFLFPKRIKIIAAVIGVVLWAASLAALCYYVIYGQEFSQSVLFVMFETNTNEASEYLSQYFSLKIVLIALAYTAVAVLLWTRLRPVYIPKPWRYVVSFALLYGLILHPIAMNTFIKNKPFEKTLDNLASRMEPAAPWQFLTGYYQYRQQLNSLTKLLNENNALPPLANFKDESGNEPRTLVLVIGESTQRGRMSLYGYPRETTPELDALHKTDPNLTVFNNVVTSRPYTIEILQQALTFANEKNPDLYLTQPSLMNMMKQAGYKTFWITNQQTMTARNTMLTVFSRQTDKQYYMNQQRTQSAREYDTNVLKPFQEVLKDPAPKKLIIVHLLGTHIKYKYRYPEDQGKFDGNTEHVPPGLNAEELESYNDYDNANLYNDHVVASLIKDFKATDPNGFLVYFSDHGEEVYDTPPHKTQGRNEDNPTRHMYTIPFLLWTSEKWQATHPRDFSQDVDRKYSLAELIHTWSDLAGLSYDGYDPTRSVVNPQFKETTRWIGNPYKKNALIDYDTLPYGDQVGNQ.

5 consecutive transmembrane segments (helical) span residues 17–37 (LGWALLYFWFFSTLLQAIIYI), 44–64 (NGIRDSLLFSSLWLIPVFLFP), 69–89 (IIAAVIGVVLWAASLAALCYY), 119–139 (YFSLKIVLIALAYTAVAVLLW), and 154–174 (VVSFALLYGLILHPIAMNTFI).

The protein belongs to the phosphoethanolamine transferase family. EptC/CptA subfamily.

The protein localises to the cell inner membrane. Its pathway is bacterial outer membrane biogenesis; LPS core biosynthesis. Catalyzes the addition of a phosphoethanolamine moiety to the outer membrane lipopolysaccharide core. Plays a role in the pathogenesis of E.coli meningitis. Required for invasion of E.coli K1 into brain microvascular endothelial cells (BMEC). Contributes to E.coli traversal across the blood-brain barrier. The sequence is that of Phosphoethanolamine transferase EptC (eptC) from Escherichia coli O18:K1:H7 (strain RS218 / NMEC).